Here is a 453-residue protein sequence, read N- to C-terminus: Ribosomal protein uS12 methylthiotransferase RimO (453 aa).

Residues 9–124 form the MTTase N-terminal domain; that stretch reads PKIGFVSLGC…VMDAVHKHMP (116 aa). Residues C18, C54, C83, C155, C159, and C162 each contribute to the [4Fe-4S] cluster site. The Radical SAM core domain maps to 141–382; it reads LTPKHFAYLK…MLLQEEISKK (242 aa). Residues 385-453 enclose the TRAM domain; sequence QAKVGKTMRV…ADAHDLWAEA (69 aa).

It belongs to the methylthiotransferase family. RimO subfamily. The cofactor is [4Fe-4S] cluster.

The protein resides in the cytoplasm. The catalysed reaction is L-aspartate(89)-[ribosomal protein uS12]-hydrogen + (sulfur carrier)-SH + AH2 + 2 S-adenosyl-L-methionine = 3-methylsulfanyl-L-aspartate(89)-[ribosomal protein uS12]-hydrogen + (sulfur carrier)-H + 5'-deoxyadenosine + L-methionine + A + S-adenosyl-L-homocysteine + 2 H(+). In terms of biological role, catalyzes the methylthiolation of an aspartic acid residue of ribosomal protein uS12. The polypeptide is Ribosomal protein uS12 methylthiotransferase RimO (Janthinobacterium sp. (strain Marseille) (Minibacterium massiliensis)).